We begin with the raw amino-acid sequence, 680 residues long: Probable ATP-dependent RNA helicase pitchoune (680 aa).

Residues 1 to 168 form a disordered region; sequence MSIREKLLMK…GKPAKDDEPF (168 aa). The span at 29 to 42 shows a compositional bias: polar residues; it reads KNAQKQEPPKQNGN. Over residues 59-69 the composition is skewed to acidic residues; sequence DEDDDLEEDFQ. Positions 74–83 are enriched in basic residues; sequence PKKKQQKQPP. Acidic residues predominate over residues 95–141; it reads SESDDDEQEDEADEDSDLDEVAEVDEEDVDSGSEDDDQQEDEDEEEP. The Q motif signature appears at 187–215; the sequence is FASLKGAVSEATLRAIKEMGFTEMTEIQS. A Helicase ATP-binding domain is found at 218 to 393; sequence LTPLLKGRDL…KLALKSEPIY (176 aa). Position 231 to 238 (231 to 238) interacts with ATP; sequence AQTGSGKT. The short motif at 341-344 is the DEVD box element; sequence DEVD. The region spanning 407–577 is the Helicase C-terminal domain; the sequence is GLEQGYIVCP…DIQLQLEKLI (171 aa). The interval 659-680 is disordered; the sequence is GSASKQRHFKQVNRDQAKKFMR. The segment covering 670 to 680 has biased composition (basic and acidic residues); it reads VNRDQAKKFMR.

Belongs to the DEAD box helicase family. DDX18/HAS1 subfamily.

It is found in the nucleus. The protein localises to the nucleolus. The catalysed reaction is ATP + H2O = ADP + phosphate + H(+). Probable RNA-dependent helicase. Functions in cell growth and proliferation. May have a role in ribosome biogenesis and, consequently, in protein biosynthesis. The chain is Probable ATP-dependent RNA helicase pitchoune (pit) from Drosophila melanogaster (Fruit fly).